A 278-amino-acid polypeptide reads, in one-letter code: Large ribosomal subunit protein uL2 (278 aa).

2 disordered regions span residues 28–58 (TPEK…GGGH) and 223–278 (GVVM…KNKR). Polar residues predominate over residues 43–53 (RNNQGRITTRH). A compositionally biased stretch (basic residues) spans 268–278 (IRRRKTGKNKR).

The protein belongs to the universal ribosomal protein uL2 family. In terms of assembly, part of the 50S ribosomal subunit. Forms a bridge to the 30S subunit in the 70S ribosome.

Its function is as follows. One of the primary rRNA binding proteins. Required for association of the 30S and 50S subunits to form the 70S ribosome, for tRNA binding and peptide bond formation. It has been suggested to have peptidyltransferase activity; this is somewhat controversial. Makes several contacts with the 16S rRNA in the 70S ribosome. The polypeptide is Large ribosomal subunit protein uL2 (Nocardioides sp. (strain ATCC BAA-499 / JS614)).